The chain runs to 453 residues: Serine/threonine-protein phosphatase 2A regulatory subunit B'' subunit gamma (453 aa).

2 consecutive EF-hand domains span residues 273-308 (PSAL…TMTN) and 341-376 (KEPA…IQEL). Residues Asp-286, Asp-288, Asn-290, Met-292, and Glu-297 each coordinate Ca(2+).

In terms of assembly, interacts with MCM3AP/GANP, PPP5C, and the phosphatase 2A core enzyme composed of the PPP2CA catalytic subunit and the constant regulatory subunit PPP2R1A. Finds in a complex with ABCB1, TFPI2 and PPP2R3C; leading to the dephosphorylation of ABCB1. Expressed in all tissues tested including heart, brain, spleen, thymus, lung, liver, kidney and testis.

It localises to the nucleus. The protein localises to the cytoplasm. Functionally, may regulate MCM3AP phosphorylation through phosphatase recruitment. May act as a negative regulator of ABCB1 expression and function through the dephosphorylation of ABCB1 by TFPI2/PPP2R3C complex. May play a role in the activation-induced cell death of B-cells. The chain is Serine/threonine-protein phosphatase 2A regulatory subunit B'' subunit gamma (Ppp2r3c) from Mus musculus (Mouse).